Consider the following 264-residue polypeptide: Acyl-[acyl-carrier-protein]--UDP-N-acetylglucosamine O-acyltransferase (264 aa).

The protein belongs to the transferase hexapeptide repeat family. LpxA subfamily. In terms of assembly, homotrimer.

Its subcellular location is the cytoplasm. The enzyme catalyses a (3R)-hydroxyacyl-[ACP] + UDP-N-acetyl-alpha-D-glucosamine = a UDP-3-O-[(3R)-3-hydroxyacyl]-N-acetyl-alpha-D-glucosamine + holo-[ACP]. It participates in glycolipid biosynthesis; lipid IV(A) biosynthesis; lipid IV(A) from (3R)-3-hydroxytetradecanoyl-[acyl-carrier-protein] and UDP-N-acetyl-alpha-D-glucosamine: step 1/6. Its function is as follows. Involved in the biosynthesis of lipid A, a phosphorylated glycolipid that anchors the lipopolysaccharide to the outer membrane of the cell. The polypeptide is Acyl-[acyl-carrier-protein]--UDP-N-acetylglucosamine O-acyltransferase (Rickettsia africae (strain ESF-5)).